The primary structure comprises 77 residues: Acyl carrier protein (77 aa).

The 76-residue stretch at 2–77 (STIEERVKKV…EAIDYVVAHQ (76 aa)) folds into the Carrier domain. Position 37 is an O-(pantetheine 4'-phosphoryl)serine (S37).

The protein belongs to the acyl carrier protein (ACP) family. In terms of processing, 4'-phosphopantetheine is transferred from CoA to a specific serine of apo-ACP by AcpS. This modification is essential for activity because fatty acids are bound in thioester linkage to the sulfhydryl of the prosthetic group.

It is found in the cytoplasm. The protein operates within lipid metabolism; fatty acid biosynthesis. In terms of biological role, carrier of the growing fatty acid chain in fatty acid biosynthesis. In Chromohalobacter salexigens (strain ATCC BAA-138 / DSM 3043 / CIP 106854 / NCIMB 13768 / 1H11), this protein is Acyl carrier protein.